The sequence spans 273 residues: Octanoyl-[GcvH]:protein N-octanoyltransferase (273 aa).

One can recognise a BPL/LPL catalytic domain in the interval 40–245; it reads ATEGAAIRSW…SLMELGATLT (206 aa). Cysteine 144 (acyl-thioester intermediate) is an active-site residue.

It belongs to the octanoyltransferase LipL family.

It catalyses the reaction N(6)-octanoyl-L-lysyl-[glycine-cleavage complex H protein] + L-lysyl-[lipoyl-carrier protein] = N(6)-octanoyl-L-lysyl-[lipoyl-carrier protein] + L-lysyl-[glycine-cleavage complex H protein]. It participates in protein modification; protein lipoylation via endogenous pathway; protein N(6)-(lipoyl)lysine from octanoyl-[acyl-carrier-protein]. Catalyzes the amidotransfer (transamidation) of the octanoyl moiety from octanoyl-GcvH to the lipoyl domain of the E2 subunit of lipoate-dependent enzymes. The protein is Octanoyl-[GcvH]:protein N-octanoyltransferase of Exiguobacterium sibiricum (strain DSM 17290 / CCUG 55495 / CIP 109462 / JCM 13490 / 255-15).